Here is a 312-residue protein sequence, read N- to C-terminus: Ribonuclease Z (312 aa).

Residues histidine 62, histidine 64, aspartate 66, histidine 67, histidine 144, aspartate 215, and histidine 273 each contribute to the Zn(2+) site. The active-site Proton acceptor is the aspartate 66.

The protein belongs to the RNase Z family. In terms of assembly, homodimer. Zn(2+) is required as a cofactor.

It carries out the reaction Endonucleolytic cleavage of RNA, removing extra 3' nucleotides from tRNA precursor, generating 3' termini of tRNAs. A 3'-hydroxy group is left at the tRNA terminus and a 5'-phosphoryl group is left at the trailer molecule.. In terms of biological role, zinc phosphodiesterase, which displays some tRNA 3'-processing endonuclease activity. Probably involved in tRNA maturation, by removing a 3'-trailer from precursor tRNA. The polypeptide is Ribonuclease Z (Prochlorococcus marinus (strain MIT 9515)).